We begin with the raw amino-acid sequence, 418 residues long: STE20-related kinase adapter protein beta (418 aa).

Positions 58 to 369 (YELQVEIGRG…ASSLLSHVFF (312 aa)) constitute a Protein kinase domain. ATP contacts are provided by residues 64 to 72 (IGRGFDNLT) and K89.

This sequence belongs to the protein kinase superfamily. STE Ser/Thr protein kinase family. STE20 subfamily. As to quaternary structure, component of a trimeric complex composed of STK11/LKB1, STRAD (STRADA or STRADB) and CAB39/MO25 (CAB39/MO25alpha or CAB39L/MO25beta): the complex tethers STK11/LKB1 in the cytoplasm and stimulates its catalytic activity. Interacts with BIRC4/XIAP. These two proteins are likely to coexist in a complex with TAK1, TRAF6, TAB1 and TAB2.

It localises to the nucleus. Its subcellular location is the cytoplasm. In terms of biological role, pseudokinase which, in complex with CAB39/MO25 (CAB39/MO25alpha or CAB39L/MO25beta), binds to and activates STK11/LKB1. Adopts a closed conformation typical of active protein kinases and binds STK11/LKB1 as a pseudosubstrate, promoting conformational change of STK11/LKB1 in an active conformation. This Mus musculus (Mouse) protein is STE20-related kinase adapter protein beta (Stradb).